We begin with the raw amino-acid sequence, 444 residues long: E1B 55 kDa protein (444 aa).

Residues 1-27 are disordered; sequence MEQDSDLESGRATNQRPPRVRVRGAGV. A phosphoserine mark is found at Ser-438 and Ser-439.

It belongs to the adenoviridae E1B 55 kDa protein family. As to quaternary structure, interacts with host PML-4 and PML-5; this interaction promotes efficient subnuclear targeting of E1B-55K to PML nuclear bodies. Interacts with E4-ORF3 protein. Interacts with E4-ORF6 protein.

The protein localises to the host nucleus. Its subcellular location is the host cytoplasm. In terms of biological role, plays a major role to prevent cellular inhibition of viral genome replication. Assembles an SCF-like E3 ubiquitin ligase complex based on the cellular proteins ELOB, ELOC, CUL5 and RBX1, in cooperation with viral E4orf6. This viral RING-type ligase ubiquitinates cellular substrates and targets them to proteasomal degradation: TP53/p53, LIG4, MRE11-RAD50-NBS1 (MRN) complex, ITGA3, DAXX and BLM. E1B-55K probably acts as the substrate-specific adapter of the SCF-like E3 ubiquitin ligase complex. Degradation of host TP53/p53 activity is essential for preventing E1A-induced TP53 accumulation that would otherwise lead to cell apoptosis and growth arrest. E1B-55K also inactivates TP53 transcription-factor activity by binding its transactivation domain. E1B-55K also functions as a SUMO1 E3 ligase for TP53 which causes the latter to be sequestered in promyelocytic leukemia (PML) nuclear bodies thereby contributing to maximal inhibition of TP53 function. The chain is E1B 55 kDa protein from Canis lupus familiaris (Dog).